The sequence spans 598 residues: Insulin-like growth factor 2 mRNA-binding protein 1 (598 aa).

RRM domains lie at 2-75 (NKLY…HSVP) and 81-156 (RKLQ…YIPD). Residues 155–195 (PDENSEVDSQRGPDNGRRPGYGPRGTSRQMSPGSGIPSKHQ) are disordered. Positions 162-171 (DSQRGPDNGR) are enriched in basic and acidic residues. At Ser-185 the chain carries Phosphoserine. KH domains lie at 198–263 (DIPL…CRMI) and 279–346 (EVPL…EQEI). Tyr-399 is modified (phosphotyrosine). KH domains lie at 407 to 472 (QETV…QGRI) and 489 to 555 (KLET…QRKI). The segment at 561–598 (QVKQQQKGGGMGTPQGPHPQGMTELGSPQGLAQEPRRK) is disordered. Residues Thr-573 and Thr-583 each carry the phosphothreonine modification. Residues 574 to 583 (PQGPHPQGMT) are compositionally biased toward low complexity. Position 587 is a phosphoserine (Ser-587).

Belongs to the RRM IMP/VICKZ family. As to quaternary structure, component of the CRD-mediated complex.

The protein resides in the nucleus. It is found in the cytoplasm. It localises to the perinuclear region. The protein localises to the P-body. Its subcellular location is the stress granule. The protein resides in the cell projection. It is found in the growth cone. It localises to the filopodium. The protein localises to the lamellipodium. Functionally, RNA-binding factor that recruits target transcripts to cytoplasmic protein-RNA complexes (mRNPs). This transcript 'caging' into mRNPs allows mRNA transport and transient storage. It also modulates the rate and location at which target transcripts encounter the translational apparatus and shields them from endonuclease attacks or microRNA-mediated degradation. Preferentially binds to N6-methyladenosine (m6A)-containing mRNAs and increases their stability. Plays a direct role in the transport and translation of transcripts required for axonal regeneration in adult sensory neurons. Regulates localized beta-actin/ACTB mRNA translation in polarized cells, a crucial process for cell migration and neurite outgrowth. Promotes the directed movement of cells by fine-tuning intracellular signaling networks and enhances the velocity of cell migration. The sequence is that of Insulin-like growth factor 2 mRNA-binding protein 1 (igf2bp1) from Danio rerio (Zebrafish).